The chain runs to 328 residues: Stress response kinase A (328 aa).

The Proton acceptor role is filled by Asp-201. Positions 206 and 217 each coordinate Mg(2+). Asp-217 is an active-site residue.

The protein belongs to the SrkA/RdoA protein kinase family. In terms of assembly, monomer. Mg(2+) serves as cofactor.

It localises to the cytoplasm. It catalyses the reaction L-seryl-[protein] + ATP = O-phospho-L-seryl-[protein] + ADP + H(+). The catalysed reaction is L-threonyl-[protein] + ATP = O-phospho-L-threonyl-[protein] + ADP + H(+). Its function is as follows. A protein kinase that phosphorylates Ser and Thr residues. Probably acts to suppress the effects of stress linked to accumulation of reactive oxygen species. Probably involved in the extracytoplasmic stress response. The sequence is that of Stress response kinase A from Escherichia coli O157:H7.